Reading from the N-terminus, the 413-residue chain is Extracellular sucrase (413 aa).

The active-site Nucleophile is the D44. Catalysis depends on E276, which acts as the Proton donor/acceptor.

It belongs to the glycosyl hydrolase 68 family.

The protein resides in the secreted. The enzyme catalyses Hydrolysis of terminal non-reducing beta-D-fructofuranoside residues in beta-D-fructofuranosides.. This Zymomonas mobilis subsp. mobilis (strain ATCC 10988 / DSM 424 / LMG 404 / NCIMB 8938 / NRRL B-806 / ZM1) protein is Extracellular sucrase (sacC).